The primary structure comprises 425 residues: Glyco-Gag protein (425 aa).

The Cytoplasmic portion of the chain corresponds to 1-54 (MSRASSGTATGARLFGISSVLGEYRVLIGDEGAGPSRSPSEVSFSVWYRSRAAR). Residues 55 to 75 (LVIVCLVASFLVPCLTFLIAE) traverse the membrane as a helical segment. Over 76-425 (TVMGQTITTP…VVQGKEETPA (350 aa)) the chain is Extracellular. N-linked (GlcNAc...) asparagine; by host glycosylation occurs at Asn-137. The segment at 174 to 285 (VRPFLPPPKP…LREGPNNRPQ (112 aa)) is disordered. Residues 177–196 (FLPPPKPPTSLPQPLSPQPS) are compositionally biased toward pro residues. Residues 197–209 (APLTSSLYPVLPK) show a composition bias toward low complexity. Composition is skewed to pro residues over residues 213–223 (PKPPVLPPDPS) and 233–248 (EPPPYPGGHGPPPSGP).

In terms of processing, glycosylated by host. Cleaved by host near the middle of the molecule, releasing the c-terminal half containing capsid and nucleoprotein domains op GAG.

It localises to the host cell membrane. Its function is as follows. Plays a role in viral particle release. Presumably acts by facilitating the fission of the virion bud at the cell surface. In Felidae (cat family), this protein is Glyco-Gag protein.